A 1939-amino-acid polypeptide reads, in one-letter code: Myosin-4 (1939 aa).

The Myosin N-terminal SH3-like domain occupies 33 to 82 (DAKTSVFVVDPKESYVKAIVQSREGGKVTAKTEAGATVTVKEDQVFSMNP). A phosphothreonine mark is found at Thr-64 and Thr-69. A Phosphoserine modification is found at Ser-79. A Myosin motor domain is found at 86–782 (DKIEDMAMMT…LLGTLEEMRD (697 aa)). Lys-130 bears the N6,N6,N6-trimethyllysine mark. 179 to 186 (GESGAGKT) serves as a coordination point for ATP. Phosphotyrosine is present on Tyr-389. Residue Thr-391 is modified to Phosphothreonine. Ser-392 is subject to Phosphoserine. A Phosphothreonine modification is found at Thr-419. Phosphotyrosine is present on Tyr-424. The residue at position 625 (Ser-625) is a Phosphoserine. Residues 659–681 (LNKLMTNLRSTHPHFVRCIIPNE) are actin-binding. Position 757 is a pros-methylhistidine (His-757). The interval 761-775 (KFGHTKVFFKAGLLG) is actin-binding. The residue at position 776 (Thr-776) is a Phosphothreonine. The 30-residue stretch at 785–814 (LAQLITRTQAICRGFLMRVEFRKMMERRES) folds into the IQ domain. Residues 843–1939 (LLKSAETEKE…EVHTKVISEE (1097 aa)) are a coiled coil. A phosphoserine mark is found at Ser-1092, Ser-1162, and Ser-1237. The residue at position 1241 (Thr-1241) is a Phosphothreonine. Ser-1243 is modified (phosphoserine). Thr-1255 is subject to Phosphothreonine. Ser-1261 is modified (phosphoserine). A Phosphothreonine modification is found at Thr-1265. The residue at position 1278 (Ser-1278) is a Phosphoserine. Position 1286 is a phosphothreonine (Thr-1286). 5 positions are modified to phosphoserine: Ser-1288, Ser-1292, Ser-1303, Ser-1306, and Ser-1413. A Phosphotyrosine modification is found at Tyr-1464. Thr-1467 carries the post-translational modification Phosphothreonine. Residue Ser-1474 is modified to Phosphoserine. The residue at position 1492 (Tyr-1492) is a Phosphotyrosine. A Phosphoserine modification is found at Ser-1495. Residue Thr-1501 is modified to Phosphothreonine. The residue at position 1514 (Ser-1514) is a Phosphoserine. Thr-1517 is subject to Phosphothreonine. Phosphoserine is present on residues Ser-1542, Ser-1547, Ser-1554, Ser-1574, Ser-1600, Ser-1603, Ser-1714, and Ser-1726. Residues Thr-1730 and Thr-1736 each carry the phosphothreonine modification. Ser-1739 is subject to Phosphoserine.

Belongs to the TRAFAC class myosin-kinesin ATPase superfamily. Myosin family. As to quaternary structure, muscle myosin is a hexameric protein that consists of 2 heavy chain subunits (MHC), 2 alkali light chain subunits (MLC) and 2 regulatory light chain subunits (MLC-2).

The protein localises to the cytoplasm. The protein resides in the myofibril. Its function is as follows. Muscle contraction. This chain is Myosin-4 (MYH4), found in Homo sapiens (Human).